The chain runs to 190 residues: Putative manganese efflux pump MntP (190 aa).

A run of 5 helical transmembrane segments spans residues 37 to 57, 64 to 84, 111 to 131, 135 to 155, and 164 to 184; these read LILA…GWGI, LSFI…GVGA, LILG…MAFV, IITL…VGAW, and FGGW…GNIL.

Belongs to the MntP (TC 9.B.29) family.

It is found in the cell membrane. Its function is as follows. Probably functions as a manganese efflux pump. In Corynebacterium efficiens (strain DSM 44549 / YS-314 / AJ 12310 / JCM 11189 / NBRC 100395), this protein is Putative manganese efflux pump MntP.